A 476-amino-acid chain; its full sequence is Serine/threonine-protein kinase Chk1 (476 aa).

A Protein kinase domain is found at 9 to 265 (WDLVQTLGEG…IPDIKKDRWY (257 aa)). ATP is bound by residues 15-23 (LGEGAYGEV) and Lys38. The Proton acceptor role is filled by Asp130. The interval 272-329 (GTKRGRVSSGGVTESPGALPKHIRSDTDFSPVKSALGEDKASYSTSQPEPGTGGALWD) is disordered. Ser280 is modified (phosphoserine; by PKB/AKT1). At Ser296 the chain carries Phosphoserine. Ser317 carries the post-translational modification Phosphoserine; by ATM and ATR. Ser345 carries the post-translational modification Phosphoserine. Residues 391 to 476 (RSLRDVCEKM…STQKVWLPPP (86 aa)) form an autoinhibitory region region.

The protein belongs to the protein kinase superfamily. CAMK Ser/Thr protein kinase family. NIM1 subfamily. In terms of processing, phosphorylated by ATR in a RAD17-dependent manner in response to ultraviolet irradiation and inhibition of DNA replication. Phosphorylated by ATM in response to ionizing irradiation. Phosphorylation at Ser-345 induces a change in the conformation of the protein and activates the kinase activity. Phosphorylation at Ser-345 also increases binding to 14-3-3 proteins and promotes nuclear retention.

It is found in the nucleus. It localises to the chromosome. The protein resides in the cytoplasm. Its subcellular location is the cytoskeleton. The protein localises to the microtubule organizing center. It is found in the centrosome. It carries out the reaction L-seryl-[protein] + ATP = O-phospho-L-seryl-[protein] + ADP + H(+). The catalysed reaction is L-threonyl-[protein] + ATP = O-phospho-L-threonyl-[protein] + ADP + H(+). Its activity is regulated as follows. Activated through phosphorylation by atr or atm in response to DNA damage or inhibition of DNA replication. Functionally, serine/threonine-protein kinase which is required for checkpoint-mediated cell cycle arrest and activation of DNA repair in response to the presence of DNA damage or unreplicated DNA. May also negatively regulate cell cycle progression during unperturbed cell cycles. This regulation is achieved by a number of mechanisms that together help to preserve the integrity of the genome. Recognizes the substrate consensus sequence [R-X-X-S/T]. Binds to and phosphorylates CDC25A, CDC25B and CDC25C. This inhibits their activity through proteasomal degradation, nucleo-cytoplasmic shuttling and inhibition by proteins of the 13-3-3 family. Inhibition of CDC25 leads to increased inhibitory tyrosine phosphorylation of CDK-cyclin complexes and blocks cell cycle progression. May promote DNA repair, regulate chromatin assembly and the transcription of genes that regulate cell-cycle progression. May also play a role in replication fork maintenance. In Gallus gallus (Chicken), this protein is Serine/threonine-protein kinase Chk1 (CHEK1).